The sequence spans 132 residues: Small ribosomal subunit protein uS8 (132 aa).

It belongs to the universal ribosomal protein uS8 family. Part of the 30S ribosomal subunit. Contacts proteins S5 and S12.

In terms of biological role, one of the primary rRNA binding proteins, it binds directly to 16S rRNA central domain where it helps coordinate assembly of the platform of the 30S subunit. The polypeptide is Small ribosomal subunit protein uS8 (Paracoccus denitrificans (strain Pd 1222)).